The primary structure comprises 224 residues: PKHD-type hydroxylase CYB_2270 (224 aa).

In terms of domain architecture, Fe2OG dioxygenase spans 78–176; that stretch reads LIHSILISCY…RYAAVSWVQS (99 aa). Residues H96, D98, and H157 each contribute to the Fe cation site. R167 provides a ligand contact to 2-oxoglutarate.

It depends on Fe(2+) as a cofactor. Requires L-ascorbate as cofactor.

The sequence is that of PKHD-type hydroxylase CYB_2270 from Synechococcus sp. (strain JA-2-3B'a(2-13)) (Cyanobacteria bacterium Yellowstone B-Prime).